The chain runs to 153 residues: UPF0260 protein YcgN (153 aa).

The protein belongs to the UPF0260 family.

In Shigella flexneri serotype 5b (strain 8401), this protein is UPF0260 protein YcgN.